The primary structure comprises 475 residues: uncharacterized protein (475 aa).

Residues 185-244 adopt a coiled-coil conformation; sequence EISVSAISEQLASLMERVDKLEKMNAALEEENKQLKKEREATIKSVKKEAKKIKQEKPQI.

This is an uncharacterized protein from Nora virus.